The chain runs to 23 residues: Keratin (23 aa).

One can recognise an IF rod domain in the interval 1–23 (YSSQLAQVQGLIGNVESQLAEIR). The tract at residues 1 to 23 (YSSQLAQVQGLIGNVESQLAEIR) is coil 2.

The protein belongs to the intermediate filament family.

The sequence is that of Keratin from Cervus elaphus (Red deer).